An 856-amino-acid polypeptide reads, in one-letter code: Putative zinc protease C28F5.4 (856 aa).

Position 71 (His-71) interacts with Zn(2+). Glu-74 serves as the catalytic Proton acceptor. Residues His-75 and Glu-152 each coordinate Zn(2+).

This sequence belongs to the peptidase M16 family.

This Caenorhabditis elegans protein is Putative zinc protease C28F5.4.